The chain runs to 590 residues: Probable lysine-specific demethylase 4B (590 aa).

In terms of domain architecture, JmjN spans 9-51; the sequence is IKVFRPTWEEFKDFPKYVAYMESQGAHKAGLAKVVPPPEWVPR. Tyr-130 contributes to the 2-oxoglutarate binding site. In terms of domain architecture, JmjC spans 140–306; sequence DTDQDSWNIN…YGKRAVQCTC (167 aa). 2 residues coordinate Fe cation: His-186 and Glu-188. Residues Asn-196 and Lys-204 each contribute to the 2-oxoglutarate site. Zn(2+)-binding residues include Cys-232 and His-238. Lys-239 provides a ligand contact to 2-oxoglutarate. Residue His-274 participates in Fe cation binding. 2 residues coordinate Zn(2+): Cys-304 and Cys-306. 2 disordered regions span residues 372–395 and 417–590; these read PTKAKSFKERNPDLDLDEIQQNPN and ATDE…TASP. Residues 445–458 show a composition bias toward acidic residues; sequence EYIDDGTEDDDEEE. Over residues 480–494 the composition is skewed to basic residues; it reads SKRKTNSRNNRGRSP. Composition is skewed to low complexity over residues 502 to 513 and 537 to 571; these read ISPASSTSSTSR and TTSPAVSSAATAVKTPTSAVVAGTTSIATTTTPPA.

This sequence belongs to the JHDM3 histone demethylase family. Requires Fe(2+) as cofactor.

Its subcellular location is the nucleus. It carries out the reaction N(6),N(6),N(6)-trimethyl-L-lysyl(9)-[histone H3] + 2 2-oxoglutarate + 2 O2 = N(6)-methyl-L-lysyl(9)-[histone H3] + 2 formaldehyde + 2 succinate + 2 CO2. Probable histone demethylase that specifically demethylates 'Lys-9' and 'Lys-36' residues of histone H3, thereby playing a central role in histone code. Demethylation of Lys residue generates formaldehyde and succinate. This chain is Probable lysine-specific demethylase 4B (Kdm4B), found in Drosophila melanogaster (Fruit fly).